We begin with the raw amino-acid sequence, 429 residues long: Histidine--tRNA ligase (429 aa).

This sequence belongs to the class-II aminoacyl-tRNA synthetase family. Homodimer.

Its subcellular location is the cytoplasm. It carries out the reaction tRNA(His) + L-histidine + ATP = L-histidyl-tRNA(His) + AMP + diphosphate + H(+). In Streptococcus pneumoniae (strain Hungary19A-6), this protein is Histidine--tRNA ligase.